The sequence spans 191 residues: MEKFTIYKGTSVPLMNDNIDTDQIIPKQFLKAIDKKGFGKNLFYEWRYSKDYEENPDFMLNKPQYRKASLLISGDNFGSGSSREHAAWALADYGFRAIIAGSYSDIFYNNSLKNGLLPIVQPKEALKSLAQLSSQEEITIDLPHQLIQTSTENFYFEIDPIWKDKLINGLDDIGITLQYEQAITAYEQKHQ.

Belongs to the LeuD family. LeuD type 1 subfamily. In terms of assembly, heterodimer of LeuC and LeuD.

The enzyme catalyses (2R,3S)-3-isopropylmalate = (2S)-2-isopropylmalate. The protein operates within amino-acid biosynthesis; L-leucine biosynthesis; L-leucine from 3-methyl-2-oxobutanoate: step 2/4. In terms of biological role, catalyzes the isomerization between 2-isopropylmalate and 3-isopropylmalate, via the formation of 2-isopropylmaleate. This is 3-isopropylmalate dehydratase small subunit from Lactococcus lactis subsp. cremoris (strain MG1363).